The following is a 245-amino-acid chain: Ureidoacrylate amidohydrolase RutB (245 aa).

The Proton acceptor role is filled by Asp38. Residue Lys147 is part of the active site. Cys180 functions as the Nucleophile in the catalytic mechanism.

The protein belongs to the isochorismatase family. RutB subfamily.

It carries out the reaction (Z)-3-ureidoacrylate + H2O + H(+) = (Z)-3-aminoacrylate + NH4(+) + CO2. It catalyses the reaction (Z)-3-ureidoacrylate + H2O = (Z)-3-aminoacrylate + carbamate + H(+). The catalysed reaction is (Z)-2-methylureidoacrylate + H2O + H(+) = (Z)-2-methylaminoacrylate + NH4(+) + CO2. In terms of biological role, hydrolyzes ureidoacrylate to form aminoacrylate and carbamate. The carbamate hydrolyzes spontaneously, thereby releasing one of the nitrogen atoms of the pyrimidine ring as ammonia and one of its carbon atoms as CO2. This is Ureidoacrylate amidohydrolase RutB from Acinetobacter baylyi (strain ATCC 33305 / BD413 / ADP1).